Here is a 239-residue protein sequence, read N- to C-terminus: Ribonuclease PH (239 aa).

Residues Arg87 and 125 to 127 (GTR) each bind phosphate.

This sequence belongs to the RNase PH family. In terms of assembly, homohexameric ring arranged as a trimer of dimers.

It catalyses the reaction tRNA(n+1) + phosphate = tRNA(n) + a ribonucleoside 5'-diphosphate. Functionally, phosphorolytic 3'-5' exoribonuclease that plays an important role in tRNA 3'-end maturation. Removes nucleotide residues following the 3'-CCA terminus of tRNAs; can also add nucleotides to the ends of RNA molecules by using nucleoside diphosphates as substrates, but this may not be physiologically important. Probably plays a role in initiation of 16S rRNA degradation (leading to ribosome degradation) during starvation. The sequence is that of Ribonuclease PH from Dehalococcoides mccartyi (strain ATCC BAA-2266 / KCTC 15142 / 195) (Dehalococcoides ethenogenes (strain 195)).